We begin with the raw amino-acid sequence, 507 residues long: ATP synthase subunit alpha, chloroplastic (507 aa).

170 to 177 (GDRQTGKT) lines the ATP pocket.

Belongs to the ATPase alpha/beta chains family. As to quaternary structure, F-type ATPases have 2 components, CF(1) - the catalytic core - and CF(0) - the membrane proton channel. CF(1) has five subunits: alpha(3), beta(3), gamma(1), delta(1), epsilon(1). CF(0) has four main subunits: a, b, b' and c.

The protein resides in the plastid. It localises to the chloroplast thylakoid membrane. It carries out the reaction ATP + H2O + 4 H(+)(in) = ADP + phosphate + 5 H(+)(out). Functionally, produces ATP from ADP in the presence of a proton gradient across the membrane. The alpha chain is a regulatory subunit. In Manihot esculenta (Cassava), this protein is ATP synthase subunit alpha, chloroplastic.